The primary structure comprises 262 residues: Acyl-[acyl-carrier-protein]--UDP-N-acetylglucosamine O-acyltransferase (262 aa).

It belongs to the transferase hexapeptide repeat family. LpxA subfamily. Homotrimer.

It localises to the cytoplasm. It carries out the reaction a (3R)-hydroxyacyl-[ACP] + UDP-N-acetyl-alpha-D-glucosamine = a UDP-3-O-[(3R)-3-hydroxyacyl]-N-acetyl-alpha-D-glucosamine + holo-[ACP]. It participates in glycolipid biosynthesis; lipid IV(A) biosynthesis; lipid IV(A) from (3R)-3-hydroxytetradecanoyl-[acyl-carrier-protein] and UDP-N-acetyl-alpha-D-glucosamine: step 1/6. In terms of biological role, involved in the biosynthesis of lipid A, a phosphorylated glycolipid that anchors the lipopolysaccharide to the outer membrane of the cell. The chain is Acyl-[acyl-carrier-protein]--UDP-N-acetylglucosamine O-acyltransferase from Histophilus somni (strain 2336) (Haemophilus somnus).